A 162-amino-acid chain; its full sequence is Ribonuclease H (162 aa).

The 141-residue stretch at 1 to 141 folds into the RNase H type-1 domain; that stretch reads MKRIEIFTDG…ADALARAGMA (141 aa). The Mg(2+) site is built by Asp9, Glu47, Asp69, and Asp133. The interval 139–162 is disordered; that stretch reads GMAPFKKKKGGDTASSEEGSARRR.

The protein belongs to the RNase H family. In terms of assembly, monomer. Mg(2+) serves as cofactor.

It localises to the cytoplasm. It catalyses the reaction Endonucleolytic cleavage to 5'-phosphomonoester.. Its function is as follows. Endonuclease that specifically degrades the RNA of RNA-DNA hybrids. This chain is Ribonuclease H, found in Chelativorans sp. (strain BNC1).